The chain runs to 336 residues: Ketol-acid reductoisomerase (NADP(+)) (336 aa).

A KARI N-terminal Rossmann domain is found at 3–183 (AKMYYDRDVD…GCTKAGVLET (181 aa)). NADP(+) contacts are provided by residues 26–29 (YGSQ), R49, S52, S54, and 84–87 (DEQQ). H109 is an active-site residue. G135 contacts NADP(+). Residues 184-329 (TFKEETETDL…KELRDQMPFI (146 aa)) enclose the KARI C-terminal knotted domain. Mg(2+) contacts are provided by D192, E196, E228, and E232. S253 contributes to the substrate binding site.

The protein belongs to the ketol-acid reductoisomerase family. Mg(2+) serves as cofactor.

It carries out the reaction (2R)-2,3-dihydroxy-3-methylbutanoate + NADP(+) = (2S)-2-acetolactate + NADPH + H(+). It catalyses the reaction (2R,3R)-2,3-dihydroxy-3-methylpentanoate + NADP(+) = (S)-2-ethyl-2-hydroxy-3-oxobutanoate + NADPH + H(+). It participates in amino-acid biosynthesis; L-isoleucine biosynthesis; L-isoleucine from 2-oxobutanoate: step 2/4. It functions in the pathway amino-acid biosynthesis; L-valine biosynthesis; L-valine from pyruvate: step 2/4. Functionally, involved in the biosynthesis of branched-chain amino acids (BCAA). Catalyzes an alkyl-migration followed by a ketol-acid reduction of (S)-2-acetolactate (S2AL) to yield (R)-2,3-dihydroxy-isovalerate. In the isomerase reaction, S2AL is rearranged via a Mg-dependent methyl migration to produce 3-hydroxy-3-methyl-2-ketobutyrate (HMKB). In the reductase reaction, this 2-ketoacid undergoes a metal-dependent reduction by NADPH to yield (R)-2,3-dihydroxy-isovalerate. The chain is Ketol-acid reductoisomerase (NADP(+)) from Deinococcus radiodurans (strain ATCC 13939 / DSM 20539 / JCM 16871 / CCUG 27074 / LMG 4051 / NBRC 15346 / NCIMB 9279 / VKM B-1422 / R1).